We begin with the raw amino-acid sequence, 394 residues long: MTQLETRTEPMVLNFGPHHPSMHGVLRLVVTLDGEDVVDCEPVIGYLHRGMEKIAENRTNVMFVPYVSRWDYAAGMFNEAITVNAPERLADVKVPRRASYIRVMMLELNRIANHLLWLGPFLADVGAQTPFFYIFREREMIYDLWEAATGQRMVNNNYFRIGGVAADLPYGWLEKLDDFCNWFGPKIDEYEKLITNNPIFRRRIEGLGTITREQAINWSLSGPMLRASGVAWDLRKVDHYECYDDFDWEVATAQEGCCFARYRVRLQEMRESLKILRQAAQQIPGGPTENLEAKRQLEGKDSEFYGFDYQIVAKKVAPTFKIPNGQLYTRVESGKGELGVFLMGNNDVTPWRWKIRAADFNNLQILPHLLKGVKVADIMAILGSIDVIMGSVDR.

Belongs to the complex I 49 kDa subunit family. As to quaternary structure, NDH-1 can be composed of about 15 different subunits; different subcomplexes with different compositions have been identified which probably have different functions.

Its subcellular location is the cellular thylakoid membrane. The catalysed reaction is a plastoquinone + NADH + (n+1) H(+)(in) = a plastoquinol + NAD(+) + n H(+)(out). It carries out the reaction a plastoquinone + NADPH + (n+1) H(+)(in) = a plastoquinol + NADP(+) + n H(+)(out). Functionally, NDH-1 shuttles electrons from an unknown electron donor, via FMN and iron-sulfur (Fe-S) centers, to quinones in the respiratory and/or the photosynthetic chain. The immediate electron acceptor for the enzyme in this species is believed to be plastoquinone. Couples the redox reaction to proton translocation, and thus conserves the redox energy in a proton gradient. Cyanobacterial NDH-1 also plays a role in inorganic carbon-concentration. This Synechococcus sp. (strain RCC307) protein is NAD(P)H-quinone oxidoreductase subunit H.